The primary structure comprises 183 residues: Translation initiation factor IF-3 (183 aa).

Polar residues predominate over residues 1–13 (MKQPDRNQQQGAK). Residues 1–24 (MKQPDRNQQQGAKSNRPAINDEIR) form a disordered region.

This sequence belongs to the IF-3 family. Monomer.

Its subcellular location is the cytoplasm. Its function is as follows. IF-3 binds to the 30S ribosomal subunit and shifts the equilibrium between 70S ribosomes and their 50S and 30S subunits in favor of the free subunits, thus enhancing the availability of 30S subunits on which protein synthesis initiation begins. The sequence is that of Translation initiation factor IF-3 from Acinetobacter baylyi (strain ATCC 33305 / BD413 / ADP1).